The primary structure comprises 349 residues: Glycerol-3-phosphate dehydrogenase [NAD(P)+] (349 aa).

The NADPH site is built by tryptophan 20, arginine 43, arginine 44, and lysine 117. Sn-glycerol 3-phosphate contacts are provided by lysine 117 and glycine 147. An NADPH-binding site is contributed by alanine 151. Sn-glycerol 3-phosphate is bound by residues lysine 202, aspartate 255, serine 265, arginine 266, and asparagine 267. Residue lysine 202 is the Proton acceptor of the active site. NADPH is bound at residue arginine 266. NADPH-binding residues include valine 297 and glutamate 299.

Belongs to the NAD-dependent glycerol-3-phosphate dehydrogenase family.

Its subcellular location is the cytoplasm. It catalyses the reaction sn-glycerol 3-phosphate + NAD(+) = dihydroxyacetone phosphate + NADH + H(+). It carries out the reaction sn-glycerol 3-phosphate + NADP(+) = dihydroxyacetone phosphate + NADPH + H(+). Its pathway is membrane lipid metabolism; glycerophospholipid metabolism. Catalyzes the reduction of the glycolytic intermediate dihydroxyacetone phosphate (DHAP) to sn-glycerol 3-phosphate (G3P), the key precursor for phospholipid synthesis. This is Glycerol-3-phosphate dehydrogenase [NAD(P)+] from Mycobacterium leprae (strain TN).